The chain runs to 229 residues: NAD(P)H-quinone oxidoreductase subunit K, chloroplastic (229 aa).

[4Fe-4S] cluster is bound by residues Cys-43, Cys-44, Cys-108, and Cys-139.

This sequence belongs to the complex I 20 kDa subunit family. NDH is composed of at least 16 different subunits, 5 of which are encoded in the nucleus. The cofactor is [4Fe-4S] cluster.

It is found in the plastid. The protein localises to the chloroplast thylakoid membrane. It catalyses the reaction a plastoquinone + NADH + (n+1) H(+)(in) = a plastoquinol + NAD(+) + n H(+)(out). The enzyme catalyses a plastoquinone + NADPH + (n+1) H(+)(in) = a plastoquinol + NADP(+) + n H(+)(out). Functionally, NDH shuttles electrons from NAD(P)H:plastoquinone, via FMN and iron-sulfur (Fe-S) centers, to quinones in the photosynthetic chain and possibly in a chloroplast respiratory chain. The immediate electron acceptor for the enzyme in this species is believed to be plastoquinone. Couples the redox reaction to proton translocation, and thus conserves the redox energy in a proton gradient. This is NAD(P)H-quinone oxidoreductase subunit K, chloroplastic from Aethionema grandiflorum (Persian stone-cress).